Reading from the N-terminus, the 506-residue chain is Methylthioalkylmalate synthase 2, chloroplastic (506 aa).

The N-terminal 49 residues, 1–49 (MASSLLTSSGMIPTTGSTVVGRSVLPFQSSLHSLRLTHSYKNPALFISC), are a transit peptide targeting the chloroplast. Residues 85–359 (VRVFDTTLRD…YTRIDTRQIM (275 aa)) enclose the Pyruvate carboxyltransferase domain.

The protein belongs to the alpha-IPM synthase/homocitrate synthase family.

The protein localises to the plastid. It localises to the chloroplast. The catalysed reaction is an omega-(methylsulfanyl)-2-oxoalkanoate + acetyl-CoA + H2O = a 2-(omega-methylsulfanyl)alkylmalate + CoA + H(+). In terms of biological role, catalyzes only the first methionine chain elongation cycle. The chain is Methylthioalkylmalate synthase 2, chloroplastic (MAM2) from Arabidopsis thaliana (Mouse-ear cress).